Reading from the N-terminus, the 507-residue chain is ATP synthase subunit alpha, chloroplastic (507 aa).

170 to 177 (GDRQTGKT) provides a ligand contact to ATP.

It belongs to the ATPase alpha/beta chains family. As to quaternary structure, F-type ATPases have 2 components, CF(1) - the catalytic core - and CF(0) - the membrane proton channel. CF(1) has five subunits: alpha(3), beta(3), gamma(1), delta(1), epsilon(1). CF(0) has four main subunits: a, b, b' and c.

Its subcellular location is the plastid. It is found in the chloroplast thylakoid membrane. It catalyses the reaction ATP + H2O + 4 H(+)(in) = ADP + phosphate + 5 H(+)(out). In terms of biological role, produces ATP from ADP in the presence of a proton gradient across the membrane. The alpha chain is a regulatory subunit. The sequence is that of ATP synthase subunit alpha, chloroplastic from Morus indica (Mulberry).